The sequence spans 547 residues: ATP synthase subunit alpha (547 aa).

G172–T179 serves as a coordination point for ATP.

Belongs to the ATPase alpha/beta chains family. As to quaternary structure, F-type ATPases have 2 components, CF(1) - the catalytic core - and CF(0) - the membrane proton channel. CF(1) has five subunits: alpha(3), beta(3), gamma(1), delta(1), epsilon(1). CF(0) has three main subunits: a(1), b(2) and c(9-12). The alpha and beta chains form an alternating ring which encloses part of the gamma chain. CF(1) is attached to CF(0) by a central stalk formed by the gamma and epsilon chains, while a peripheral stalk is formed by the delta and b chains.

The protein localises to the cell membrane. The catalysed reaction is ATP + H2O + 4 H(+)(in) = ADP + phosphate + 5 H(+)(out). Functionally, produces ATP from ADP in the presence of a proton gradient across the membrane. The alpha chain is a regulatory subunit. The polypeptide is ATP synthase subunit alpha (Rhodococcus opacus (strain B4)).